Here is a 346-residue protein sequence, read N- to C-terminus: L-glyceraldehyde 3-phosphate reductase (346 aa).

Residues W33, D61, Y66, S168, Q193, T223, L225, Q227, K233, S303, Q307, and N311 each coordinate NADP(+).

It belongs to the shaker potassium channel beta subunit family.

The catalysed reaction is a primary alcohol + NADP(+) = an aldehyde + NADPH + H(+). Functionally, aldo-keto reductase that catalyzes the stereospecific, NADPH-dependent reduction of L-glyceraldehyde 3-phosphate (L-GAP) to L-glycerol 3-phosphate (L-G3P). This Escherichia coli O157:H7 protein is L-glyceraldehyde 3-phosphate reductase.